The following is an 80-amino-acid chain: Putative membrane protein insertion efficiency factor (80 aa).

Belongs to the UPF0161 family.

The protein resides in the cell inner membrane. Functionally, could be involved in insertion of integral membrane proteins into the membrane. The chain is Putative membrane protein insertion efficiency factor from Paracoccus denitrificans (strain Pd 1222).